The following is a 701-amino-acid chain: DNA ligase (701 aa).

NAD(+) is bound by residues 43–47 (DADYD), 92–93 (SL), and glutamate 126. Lysine 128 functions as the N6-AMP-lysine intermediate in the catalytic mechanism. NAD(+)-binding residues include arginine 149, glutamate 186, lysine 302, and lysine 326. Zn(2+)-binding residues include cysteine 417, cysteine 420, cysteine 440, and cysteine 446. The BRCT domain maps to 622–701 (ETGSPVTGKT…DEWLALIGET (80 aa)).

This sequence belongs to the NAD-dependent DNA ligase family. LigA subfamily. Mg(2+) serves as cofactor. Mn(2+) is required as a cofactor.

The enzyme catalyses NAD(+) + (deoxyribonucleotide)n-3'-hydroxyl + 5'-phospho-(deoxyribonucleotide)m = (deoxyribonucleotide)n+m + AMP + beta-nicotinamide D-nucleotide.. Its function is as follows. DNA ligase that catalyzes the formation of phosphodiester linkages between 5'-phosphoryl and 3'-hydroxyl groups in double-stranded DNA using NAD as a coenzyme and as the energy source for the reaction. It is essential for DNA replication and repair of damaged DNA. The sequence is that of DNA ligase from Hyphomonas neptunium (strain ATCC 15444).